The primary structure comprises 176 residues: Nascent polypeptide-associated complex subunit alpha (176 aa).

The 65-residue stretch at 14–78 (SKNEKKAREL…AKVDDFTQRL (65 aa)) folds into the NAC-A/B domain. The disordered stretch occupies residues 85–127 (LQQNEGVLPAGQDAVSKDPQSIQADMQAAADSATDKPSADDAV). In terms of domain architecture, UBA spans 137 to 176 (LNADDIELVMQQAGVPRAKAAKALKEHDSDIVNAIMALSG).

This sequence belongs to the NAC-alpha family. In terms of assembly, part of the nascent polypeptide-associated complex (NAC), consisting of EGD2 and EGD1. NAC associates with ribosomes via EGD1.

It localises to the cytoplasm. The protein resides in the nucleus. Functionally, component of the nascent polypeptide-associated complex (NAC), a dynamic component of the ribosomal exit tunnel, protecting the emerging polypeptides from interaction with other cytoplasmic proteins to ensure appropriate nascent protein targeting. The NAC complex also promotes mitochondrial protein import by enhancing productive ribosome interactions with the outer mitochondrial membrane and blocks the inappropriate interaction of ribosomes translating non-secretory nascent polypeptides with translocation sites in the membrane of the endoplasmic reticulum. EGD2 may also be involved in transcription regulation. The sequence is that of Nascent polypeptide-associated complex subunit alpha (EGD2) from Kluyveromyces lactis (strain ATCC 8585 / CBS 2359 / DSM 70799 / NBRC 1267 / NRRL Y-1140 / WM37) (Yeast).